Reading from the N-terminus, the 124-residue chain is Galanin peptides (124 aa).

The first 19 residues, 1-19, serve as a signal peptide directing secretion; it reads MARGSVILLAWLLLVATLS. Positions 20 to 30 are excised as a propeptide; it reads ATLGLGMPTKE. Position 61 is a threonine amide (Thr61). 2 positions are modified to phosphoserine: Ser117 and Ser118.

It belongs to the galanin family.

The protein localises to the secreted. Endocrine hormone of the central and peripheral nervous systems that binds and activates the G protein-coupled receptors GALR1, GALR2, and GALR3. This small neuropeptide may regulate diverse physiologic functions including contraction of smooth muscle of the gastrointestinal and genitourinary tract, growth hormone and insulin release and adrenal secretion. This chain is Galanin peptides (Gal), found in Rattus norvegicus (Rat).